Here is a 334-residue protein sequence, read N- to C-terminus: GTP 3',8-cyclase (334 aa).

One can recognise a Radical SAM core domain in the interval 11-235 (GFNRKVDYLR…VESAESSQGP (225 aa)). Residue Arg-20 participates in GTP binding. Cys-27 and Cys-31 together coordinate [4Fe-4S] cluster. Tyr-33 contacts S-adenosyl-L-methionine. [4Fe-4S] cluster is bound at residue Cys-34. Arg-69 contributes to the GTP binding site. Gly-73 serves as a coordination point for S-adenosyl-L-methionine. Position 100 (Thr-100) interacts with GTP. Ser-124 contacts S-adenosyl-L-methionine. Lys-161 is a GTP binding site. An S-adenosyl-L-methionine-binding site is contributed by Met-195. Positions 260 and 263 each coordinate [4Fe-4S] cluster. 265–267 (RVR) serves as a coordination point for GTP. [4Fe-4S] cluster is bound at residue Cys-277.

Belongs to the radical SAM superfamily. MoaA family. Monomer and homodimer. [4Fe-4S] cluster is required as a cofactor.

It catalyses the reaction GTP + AH2 + S-adenosyl-L-methionine = (8S)-3',8-cyclo-7,8-dihydroguanosine 5'-triphosphate + 5'-deoxyadenosine + L-methionine + A + H(+). It participates in cofactor biosynthesis; molybdopterin biosynthesis. Functionally, catalyzes the cyclization of GTP to (8S)-3',8-cyclo-7,8-dihydroguanosine 5'-triphosphate. This chain is GTP 3',8-cyclase, found in Pseudomonas entomophila (strain L48).